The following is a 765-amino-acid chain: Lysyl oxidase homolog 2 (765 aa).

A signal peptide spans 1 to 19 (MLVSHVFLLTLSLSVPSLG). SRCR domains lie at 49–150 (VRLA…VQCS), 179–293 (IRPI…VSCT), 317–416 (VRLR…VRCN), and 426–535 (VRLS…VSCV). 9 cysteine pairs are disulfide-bonded: cysteine 75/cysteine 139, cysteine 88/cysteine 149, cysteine 119/cysteine 129, cysteine 209/cysteine 282, cysteine 222/cysteine 292, cysteine 256/cysteine 266, cysteine 342/cysteine 405, cysteine 355/cysteine 415, and cysteine 386/cysteine 396. Asparagine 279 is a glycosylation site (N-linked (GlcNAc...) asparagine). Asparagine 446 carries an N-linked (GlcNAc...) asparagine glycan. Cystine bridges form between cysteine 455–cysteine 521, cysteine 468–cysteine 534, and cysteine 502–cysteine 512. A lysyl-oxidase like region spans residues 539–742 (PDLVLNAALV…WMYNCHIGGS (204 aa)). Aspartate 540 and leucine 541 together coordinate Ca(2+). Disulfide bonds link cysteine 564/cysteine 616, cysteine 570/cysteine 686, cysteine 648/cysteine 664, and cysteine 654/cysteine 676. Positions 617, 619, and 621 each coordinate Cu cation. N-linked (GlcNAc...) asparagine glycosylation occurs at asparagine 635. Residues 644 to 680 (KASFCLEDSECEADIQKQYVCANFGEQGITVGCWDLY) constitute a cross-link (lysine tyrosylquinone (Lys-Tyr)). At tyrosine 680 the chain carries 2',4',5'-topaquinone. Residues glutamate 713, aspartate 715, asparagine 718, and asparagine 719 each contribute to the Ca(2+) site. A disulfide bridge links cysteine 723 with cysteine 737.

It belongs to the lysyl oxidase family. It depends on Cu cation as a cofactor. The cofactor is lysine tyrosylquinone residue. The lysine tyrosylquinone cross-link (LTQ) is generated by condensation of the epsilon-amino group of a lysine with a topaquinone produced by oxidation of tyrosine.

It localises to the secreted. Its subcellular location is the extracellular space. The protein localises to the extracellular matrix. It is found in the basement membrane. The protein resides in the nucleus. It localises to the chromosome. Its subcellular location is the endoplasmic reticulum. It carries out the reaction L-lysyl-[protein] + O2 + H2O = (S)-2-amino-6-oxohexanoyl-[protein] + H2O2 + NH4(+). Its function is as follows. Mediates the post-translational oxidative deamination of lysine residues on target proteins leading to the formation of deaminated lysine (allysine). Acts as a transcription corepressor and specifically mediates deamination of trimethylated 'Lys-4' of histone H3 (H3K4me3), a specific tag for epigenetic transcriptional activation. Shows no activity against histone H3 when it is trimethylated on 'Lys-9' (H3K9me3) or 'Lys-27' (H3K27me3) or when 'Lys-4' is monomethylated (H3K4me1) or dimethylated (H3K4me2). Also mediates deamination of methylated TAF10, a member of the transcription factor IID (TFIID) complex, which induces release of TAF10 from promoters, leading to inhibition of TFIID-dependent transcription. LOXL2-mediated deamination of TAF10 results in transcriptional repression of genes required for embryonic stem cell pluripotency. Involved in epithelial to mesenchymal transition (EMT) and participates in repression of E-cadherin, probably by mediating deamination of histone H3. When secreted into the extracellular matrix, promotes cross-linking of extracellular matrix proteins by mediating oxidative deamination of peptidyl lysine residues in precursors to fibrous collagen and elastin. Acts as a regulator of sprouting angiogenesis, probably via collagen IV scaffolding. Acts as a regulator of chondrocyte differentiation, probably by regulating expression of factors that control chondrocyte differentiation. This chain is Lysyl oxidase homolog 2 (loxl2), found in Xenopus laevis (African clawed frog).